The sequence spans 500 residues: NAD(P)H-quinone oxidoreductase chain 4, chloroplastic (500 aa).

14 helical membrane passes run 4-24 (FPWL…IFFL), 37-57 (MSIC…HFQL), 87-107 (LGSI…AWPV), 113-130 (LFYF…GLFS), 134-154 (LLLF…LLSM), 167-187 (FILY…GMGL), 211-231 (ILFY…IPLH), 242-262 (HYST…YGLI), 272-292 (AHYL…IYAA), 313-333 (MGFI…GAIL), 334-354 (QILS…TACD), 386-406 (LALP…GLIT), 417-437 (LITF…LSML), and 462-482 (LFLL…PDFV).

Belongs to the complex I subunit 4 family.

It localises to the plastid. The protein resides in the chloroplast thylakoid membrane. It catalyses the reaction a plastoquinone + NADH + (n+1) H(+)(in) = a plastoquinol + NAD(+) + n H(+)(out). The catalysed reaction is a plastoquinone + NADPH + (n+1) H(+)(in) = a plastoquinol + NADP(+) + n H(+)(out). The chain is NAD(P)H-quinone oxidoreductase chain 4, chloroplastic from Oryza nivara (Indian wild rice).